We begin with the raw amino-acid sequence, 174 residues long: 2-hydroxy-palmitic acid dioxygenase MPO1 (174 aa).

Over 1 to 23 (MGEGLLDLRSQLGFYKFYHHNPK) the chain is Cytoplasmic. A helical transmembrane segment spans residues 24–44 (NVLIHSIFVPTILFSGSCMLH). Residues 45–63 (RVKIYQSISLTAVLSVLFS) are Lumenal-facing. The chain crosses the membrane as a helical span at residues 64-84 (IFYCLLYLPTGLLAGVLLLLL). At 85 to 98 (NLALIDHRVDLTFK) the chain is on the cytoplasmic side. Residues 99 to 119 (QELGLFTIGWIFQFVGHGVFE) form a helical membrane-spanning segment. The Lumenal portion of the chain corresponds to 120–131 (KRRPALIDNLVQ). The helical transmembrane segment at 132–152 (SLVLAPYFIMFEFLFKLGFMP) threads the bilayer. Residues 153 to 174 (RLKATLEHDLEIKQRNLRMQRQ) are Cytoplasmic-facing.

The protein belongs to the MPO1 family. It depends on Fe(2+) as a cofactor.

It localises to the endoplasmic reticulum membrane. It carries out the reaction (R)-2-hydroxyhexadecanoate + O2 = pentadecanoate + CO2 + H2O. In terms of biological role, dioxygenase that catalyzes the alpha-oxidation of 2-hydroxy fatty acids in an iron-dependent manner. Involved in metabolism of phytosphingosine and is required for proper endoplasmic reticulum stress response. This Saccharomyces cerevisiae (strain ATCC 204508 / S288c) (Baker's yeast) protein is 2-hydroxy-palmitic acid dioxygenase MPO1.